A 111-amino-acid polypeptide reads, in one-letter code: Universal stress protein B (111 aa).

2 helical membrane passes run 1-21 (MIST…NMAR) and 90-110 (FILT…LLIW).

Belongs to the universal stress protein B family.

The protein resides in the cell inner membrane. This Enterobacter sp. (strain 638) protein is Universal stress protein B.